We begin with the raw amino-acid sequence, 445 residues long: Methylenetetrahydrofolate--tRNA-(uracil-5-)-methyltransferase TrmFO (445 aa).

9–14 is an FAD binding site; sequence GGGLAG.

This sequence belongs to the MnmG family. TrmFO subfamily. Requires FAD as cofactor.

Its subcellular location is the cytoplasm. The catalysed reaction is uridine(54) in tRNA + (6R)-5,10-methylene-5,6,7,8-tetrahydrofolate + NADH + H(+) = 5-methyluridine(54) in tRNA + (6S)-5,6,7,8-tetrahydrofolate + NAD(+). The enzyme catalyses uridine(54) in tRNA + (6R)-5,10-methylene-5,6,7,8-tetrahydrofolate + NADPH + H(+) = 5-methyluridine(54) in tRNA + (6S)-5,6,7,8-tetrahydrofolate + NADP(+). Its function is as follows. Catalyzes the folate-dependent formation of 5-methyl-uridine at position 54 (M-5-U54) in all tRNAs. This chain is Methylenetetrahydrofolate--tRNA-(uracil-5-)-methyltransferase TrmFO, found in Solibacter usitatus (strain Ellin6076).